A 717-amino-acid chain; its full sequence is Scinderin (717 aa).

The interval 1 to 363 (MAPERHPPAF…DGFGKVYVTE (363 aa)) is actin-severing. Residues 28 to 108 (ELVPVPPSRH…IQGYESNEFV (81 aa)) form a Gelsolin-like 1 repeat. A 1,2-diacyl-sn-glycero-3-phospho-(1D-myo-inositol-4,5-bisphosphate) contacts are provided by residues 112–119 (KGGIKYKA) and 138–146 (RLLHIKGRR). 5 Gelsolin-like repeats span residues 148–220 (VRAT…PDEL), 265–340 (VVAE…TPIF), 408–483 (RVPV…PHLL), 526–590 (AEVD…EEFW), and 628–703 (IEEV…PPTF). The ca(2+)-dependent actin binding stretch occupies residues 364-715 (RVAKIEQIEF…WFLAWDSNKW (352 aa)). Ca(2+) contacts are provided by N538, D539, E562, D643, D644, and E666.

Belongs to the villin/gelsolin family.

The protein resides in the cytoplasm. The protein localises to the cytoskeleton. It localises to the cell projection. Its subcellular location is the podosome. Functionally, ca(2+)-dependent actin filament-severing protein that has a regulatory function in exocytosis by affecting the organization of the microfilament network underneath the plasma membrane. In vitro, also has barbed end capping and nucleating activities in the presence of Ca(2+). Severing activity is inhibited by phosphatidylinositol 4,5-bis-phosphate (PIP2). Required for megakaryocyte differentiation, maturation, polyploidization and apoptosis with the release of platelet-like particles. Plays a role in osteoclastogenesis (OCG) and actin cytoskeletal organization in osteoclasts. Regulates chondrocyte proliferation and differentiation. Inhibits cell proliferation and tumorigenesis. Signaling is mediated by MAPK, p38 and JNK pathways. The protein is Scinderin (SCIN) of Gallus gallus (Chicken).